We begin with the raw amino-acid sequence, 353 residues long: RNA 3'-terminal phosphate cyclase (353 aa).

ATP is bound by residues Q100 and 289–292 (HMSD). H315 (tele-AMP-histidine intermediate) is an active-site residue.

It belongs to the RNA 3'-terminal cyclase family. Type 1 subfamily.

It localises to the cytoplasm. The enzyme catalyses a 3'-end 3'-phospho-ribonucleotide-RNA + ATP = a 3'-end 2',3'-cyclophospho-ribonucleotide-RNA + AMP + diphosphate. Catalyzes the conversion of 3'-phosphate to a 2',3'-cyclic phosphodiester at the end of RNA. The mechanism of action of the enzyme occurs in 3 steps: (A) adenylation of the enzyme by ATP; (B) transfer of adenylate to an RNA-N3'P to produce RNA-N3'PP5'A; (C) and attack of the adjacent 2'-hydroxyl on the 3'-phosphorus in the diester linkage to produce the cyclic end product. The biological role of this enzyme is unknown but it is likely to function in some aspects of cellular RNA processing. This chain is RNA 3'-terminal phosphate cyclase, found in Ignicoccus hospitalis (strain KIN4/I / DSM 18386 / JCM 14125).